Consider the following 313-residue polypeptide: Formate-nitrite transporter (313 aa).

Over 1–47 the chain is Cytoplasmic; the sequence is MPKSNTKYVIDPLSVKTSCSSEESYIRCVEYGKSKAHYSSLILLAKA. The chain crosses the membrane as a helical span at residues 48 to 68; the sequence is ILAGVFVGVCAHASGIAGGLF. The Extracellular segment spans residues 69 to 77; it reads YYHKLREYV. A helical transmembrane segment spans residues 78–98; the sequence is GASMSAFVYGFTFPIAFLCII. Over 99–128 the chain is Cytoplasmic; sequence CTGSDLFTGNTLAVTTALLHGKVSCLEYVR. Residues 129-149 form a helical membrane-spanning segment; the sequence is VMCISLFGNYVGAVSFAFFVS. Residues 150 to 185 are Extracellular-facing; sequence YGSGAFHKKEQVDKNHIFQFLNDIAVKKVNHTFVEC. A glycan (N-linked (GlcNAc...) asparagine) is linked at N179. The helical transmembrane segment at 186-206 threads the bilayer; sequence ICLAIGCNIFVCLAVYFVLSI. The Cytoplasmic portion of the chain corresponds to 207–211; that stretch reads KDGSG. Residues 212-232 form a helical membrane-spanning segment; sequence MVFSVFFAVYAFAIAGYEHII. At 233–260 the chain is on the extracellular side; it reads ANIYTLNISLMIDTEVSFTQVYFKNLLP. N239 carries N-linked (GlcNAc...) asparagine glycosylation. Residues 261–281 traverse the membrane as a helical segment; the sequence is TLIGNYIAGALVLACPLFFIY. Over 282-313 the chain is Cytoplasmic; the sequence is RSYYINYEKMNEPSGGSLRSISIEMKNDGGAT.

This sequence belongs to the FNT transporter (TC 1.A.16) family. As to quaternary structure, homopentamer.

It is found in the cell membrane. It localises to the vacuole membrane. It carries out the reaction (S)-lactate(in) + H(+)(in) = (S)-lactate(out) + H(+)(out). The enzyme catalyses formate(in) + H(+)(in) = formate(out) + H(+)(out). The catalysed reaction is pyruvate(out) + H(+)(out) = pyruvate(in) + H(+)(in). It catalyses the reaction acetate(out) + H(+)(out) = acetate(in) + H(+)(in). Inhibited by the Malaria Box compound MMV007839 and its derivatives BH296 and BH267.meta. In terms of biological role, monocarboxylate-proton symporter that mediates the efflux of the waste product lactate in the intraerythrocytic parasites; active in acidic-to-neutral pH range. Transports L-lactate. In Plasmodium ovale, this protein is Formate-nitrite transporter.